A 666-amino-acid polypeptide reads, in one-letter code: DNA ligase (666 aa).

NAD(+) contacts are provided by residues 31-35 (DYDFD), 80-81 (SL), and Glu-111. Catalysis depends on Lys-113, which acts as the N6-AMP-lysine intermediate. NAD(+) contacts are provided by Arg-134, Glu-170, Lys-285, and Lys-309. Zn(2+) contacts are provided by Cys-403, Cys-406, Cys-421, and Cys-427. The region spanning 587 to 666 (VVSNKLLGKI…ESDFSALLTS (80 aa)) is the BRCT domain.

It belongs to the NAD-dependent DNA ligase family. LigA subfamily. Mg(2+) serves as cofactor. It depends on Mn(2+) as a cofactor.

The enzyme catalyses NAD(+) + (deoxyribonucleotide)n-3'-hydroxyl + 5'-phospho-(deoxyribonucleotide)m = (deoxyribonucleotide)n+m + AMP + beta-nicotinamide D-nucleotide.. Its function is as follows. DNA ligase that catalyzes the formation of phosphodiester linkages between 5'-phosphoryl and 3'-hydroxyl groups in double-stranded DNA using NAD as a coenzyme and as the energy source for the reaction. It is essential for DNA replication and repair of damaged DNA. The sequence is that of DNA ligase from Flavobacterium psychrophilum (strain ATCC 49511 / DSM 21280 / CIP 103535 / JIP02/86).